The primary structure comprises 247 residues: V-type proton ATPase subunit D (247 aa).

This sequence belongs to the V-ATPase D subunit family. V-ATPase is a heteromultimeric enzyme made up of two complexes: the ATP-hydrolytic V1 complex and the proton translocation V0 complex. The V1 complex consists of three catalytic AB heterodimers that form a heterohexamer, three peripheral stalks each consisting of EG heterodimers, one central rotor including subunits D and F, and the regulatory subunits C and H. The proton translocation complex V0 consists of the proton transport subunit a, a ring of proteolipid subunits c9c'', rotary subunit d, subunits e and f, and the accessory subunits ATP6AP1/Ac45 and ATP6AP2/PRR. Interacts with SNX10.

It is found in the membrane. Its subcellular location is the cytoplasmic vesicle. It localises to the clathrin-coated vesicle membrane. The protein resides in the cytoplasm. The protein localises to the cytoskeleton. It is found in the microtubule organizing center. Its subcellular location is the centrosome. It localises to the cell projection. The protein resides in the cilium. Subunit of the V1 complex of vacuolar(H+)-ATPase (V-ATPase), a multisubunit enzyme composed of a peripheral complex (V1) that hydrolyzes ATP and a membrane integral complex (V0) that translocates protons. V-ATPase is responsible for acidifying and maintaining the pH of intracellular compartments and in some cell types, is targeted to the plasma membrane, where it is responsible for acidifying the extracellular environment. May play a role in cilium biogenesis through regulation of the transport and the localization of proteins to the cilium. The protein is V-type proton ATPase subunit D (Atp6v1d) of Mus musculus (Mouse).